A 119-amino-acid polypeptide reads, in one-letter code: Immunoglobulin heavy variable 2-70D (119 aa).

Positions 1-19 (MDILCSTLLLLTVPSWVLS) are cleaved as a signal peptide. Gln-20 carries the post-translational modification Pyrrolidone carboxylic acid. The framework-1 stretch occupies residues 20-44 (QVTLKESGPALVKPTQTLTLTCTFS). One can recognise an Ig-like domain in the interval 20–119 (QVTLKESGPA…DTATYYCARI (100 aa)). Cys-41 and Cys-116 are oxidised to a cystine. The segment at 45–54 (GFSLSTSGMR) is complementarity-determining-1. Positions 55–71 (VSWIRQPPGKALEWLAR) are framework-2. Residues 72-78 (IDWDDDK) are complementarity-determining-2. A framework-3 region spans residues 79–116 (FYSTSLKTRLTISKDTSKNQVVLTMTNMDPVDTATYYC). The interval 117–119 (ARI) is complementarity-determining-3.

As to quaternary structure, immunoglobulins are composed of two identical heavy chains and two identical light chains; disulfide-linked.

It is found in the secreted. The protein localises to the cell membrane. V region of the variable domain of immunoglobulin heavy chains that participates in the antigen recognition. Immunoglobulins, also known as antibodies, are membrane-bound or secreted glycoproteins produced by B lymphocytes. In the recognition phase of humoral immunity, the membrane-bound immunoglobulins serve as receptors which, upon binding of a specific antigen, trigger the clonal expansion and differentiation of B lymphocytes into immunoglobulins-secreting plasma cells. Secreted immunoglobulins mediate the effector phase of humoral immunity, which results in the elimination of bound antigens. The antigen binding site is formed by the variable domain of one heavy chain, together with that of its associated light chain. Thus, each immunoglobulin has two antigen binding sites with remarkable affinity for a particular antigen. The variable domains are assembled by a process called V-(D)-J rearrangement and can then be subjected to somatic hypermutations which, after exposure to antigen and selection, allow affinity maturation for a particular antigen. This chain is Immunoglobulin heavy variable 2-70D, found in Homo sapiens (Human).